Consider the following 389-residue polypeptide: S-adenosylmethionine synthase (389 aa).

His17 contacts ATP. Asp19 is a binding site for Mg(2+). Glu45 provides a ligand contact to K(+). Residues Glu58 and Gln101 each coordinate L-methionine. The flexible loop stretch occupies residues 101–111; that stretch reads QSPDIAQGVNP. Residues 168 to 170, 234 to 235, Asp243, 249 to 250, and Lys270 each bind ATP; these read DGK, RF, and RK. Asp243 provides a ligand contact to L-methionine. An L-methionine-binding site is contributed by Lys274.

The protein belongs to the AdoMet synthase family. In terms of assembly, homotetramer; dimer of dimers. Mg(2+) serves as cofactor. K(+) is required as a cofactor.

It is found in the cytoplasm. It carries out the reaction L-methionine + ATP + H2O = S-adenosyl-L-methionine + phosphate + diphosphate. It participates in amino-acid biosynthesis; S-adenosyl-L-methionine biosynthesis; S-adenosyl-L-methionine from L-methionine: step 1/1. Functionally, catalyzes the formation of S-adenosylmethionine (AdoMet) from methionine and ATP. The overall synthetic reaction is composed of two sequential steps, AdoMet formation and the subsequent tripolyphosphate hydrolysis which occurs prior to release of AdoMet from the enzyme. This chain is S-adenosylmethionine synthase, found in Syntrophobacter fumaroxidans (strain DSM 10017 / MPOB).